The chain runs to 179 residues: Putative FBD-associated F-box protein At3g12840 (179 aa).

One can recognise an F-box domain in the interval 14-60 (AARINDLPDDLLATVLSFVPTKDAVATSILSKRWRPIWKRAVNLESD). In terms of domain architecture, FBD spans 101–152 (KWKQPDFVPLSLYRSLEAFEWIGFKGREKTEKKAAFHILRNACNLKTMAITT).

The polypeptide is Putative FBD-associated F-box protein At3g12840 (Arabidopsis thaliana (Mouse-ear cress)).